A 118-amino-acid polypeptide reads, in one-letter code: Large ribosomal subunit protein uL18 (118 aa).

It belongs to the universal ribosomal protein uL18 family. As to quaternary structure, part of the 50S ribosomal subunit; part of the 5S rRNA/L5/L18/L25 subcomplex. Contacts the 5S and 23S rRNAs.

In terms of biological role, this is one of the proteins that bind and probably mediate the attachment of the 5S RNA into the large ribosomal subunit, where it forms part of the central protuberance. The protein is Large ribosomal subunit protein uL18 of Campylobacter jejuni subsp. doylei (strain ATCC BAA-1458 / RM4099 / 269.97).